A 483-amino-acid polypeptide reads, in one-letter code: Altronate oxidoreductase (483 aa).

18 to 29 (IIQFGEGNFLRA) provides a ligand contact to NAD(+).

It belongs to the mannitol dehydrogenase family. UxaB subfamily.

It catalyses the reaction D-altronate + NAD(+) = keto-D-tagaturonate + NADH + H(+). Its pathway is carbohydrate metabolism; pentose and glucuronate interconversion. The chain is Altronate oxidoreductase from Yersinia enterocolitica serotype O:8 / biotype 1B (strain NCTC 13174 / 8081).